We begin with the raw amino-acid sequence, 130 residues long: Capsid protein (130 aa).

Positions 32-105 (EWISSNSRSQ…FATNDDCALI (74 aa)) are viral RNA-binding.

The protein belongs to the Leviviricetes capsid protein family. As to quaternary structure, homodimer. The capsid proteins form dimers that assemble by group of 5. Twelve such pentamers are linked together with free dimers. The homodimers binds to the viral RNA via an operator hairpin, but also to many other RNA sequences in the viral genome; this interaction probably shifts the virus from the replicative to the assembly phase and ensures specific encapsidation of the viral genome.

It localises to the virion. In terms of biological role, capsid protein self-assembles to form an icosahedral capsid with a T=3 symmetry, about 26 nm in diameter, and consisting of 89 capsid proteins dimers (178 capsid proteins). Involved in viral genome encapsidation through the interaction between a capsid protein dimer and the multiple packaging signals present in the RNA genome. The capsid also contains 1 copy of the A2 maturation protein. Acts as a translational repressor of viral replicase synthesis late in infection. This latter function is the result of capsid protein interaction with an RNA hairpin which contains the replicase ribosome-binding site. This Enterobacteria phage fr (Bacteriophage fr) protein is Capsid protein.